Here is a 116-residue protein sequence, read N- to C-terminus: Large ribosomal subunit protein bL20c (116 aa).

The protein belongs to the bacterial ribosomal protein bL20 family.

It localises to the plastid. The protein localises to the chloroplast. Its function is as follows. Binds directly to 23S ribosomal RNA and is necessary for the in vitro assembly process of the 50S ribosomal subunit. It is not involved in the protein synthesizing functions of that subunit. The polypeptide is Large ribosomal subunit protein bL20c (rpl20) (Marchantia polymorpha (Common liverwort)).